We begin with the raw amino-acid sequence, 483 residues long: UDP-glycosyltransferase 85C1 (483 aa).

UDP-alpha-D-glucose-binding positions include serine 304, 360 to 361 (WC), 378 to 386 (HCGWGSIIE), and 400 to 403 (IGDQ).

Belongs to the UDP-glycosyltransferase family.

Its function is as follows. May glycosylate diterpenes or flavonols in leaves. The protein is UDP-glycosyltransferase 85C1 of Stevia rebaudiana (Stevia).